Here is a 515-residue protein sequence, read N- to C-terminus: MTKTEEKPFGKLRSFLWPIHTHELKKVLPMFLMFFCITFNYTVLRDTKDTLIVGAPGSGAEAIPFIKFWLVVPCAIIFMLIYAKLSNILSKQALFYAVGTPFLIFFALFPTVIYPLRDVLHPTEFADRLQAILPPGLLGLVAILRNWTFAAFYVLAELWGSVMLSLMFWGFANEITKIHEAKRFYALFGIGANISLLASGRAIVWASKLRASVSEGVDPWGISLRLLMAMTIVSGLVLMASYWWINKNVLTDPRFYNPEEMQKGKKGAKPKMNMKDSFLYLARSPYILLLALLVIAYGICINLIEVTWKSQLKLQYPNMNDYSEFMGNFSFWTGVVSVLIMLFVGGNVIRKFGWLTGALVTPVMVLLTGIVFFALVIFRNQASGLVAMFGTTPLMLAVVVGAIQNILSKSTKYALFDSTKEMAYIPLDQEQKVKGKAAIDVVAARFGKSGGALIQQGLLVICGSIGAMTPYLAVILLFIIAIWLVSATKLNKLFLAQSALKEQEVAQEDSAPASS.

A run of 12 helical transmembrane segments spans residues 24 to 44 (LKKV…YTVL), 62 to 82 (AIPF…MLIY), 93 to 113 (ALFY…PTVI), 124 to 144 (EFAD…VAIL), 149 to 169 (FAAF…LMFW), 184 to 204 (FYAL…RAIV), 226 to 246 (LLMA…WWIN), 286 to 306 (YILL…LIEV), 329 to 349 (FSFW…GNVI), 358 to 378 (ALVT…LVIF), 383 to 403 (SGLV…VGAI), and 465 to 485 (IGAM…IWLV).

This sequence belongs to the ADP/ATP translocase tlc family.

The protein localises to the cell membrane. The polypeptide is ADP,ATP carrier protein 1 (tlcA) (Chlamydia pneumoniae (Chlamydophila pneumoniae)).